We begin with the raw amino-acid sequence, 396 residues long: tRNA (guanine-N(7)-)-methyltransferase (396 aa).

S-adenosyl-L-methionine-binding residues include Glu125, Glu150, and Asp177. Substrate contacts are provided by Lys203 and Asp233.

Belongs to the class I-like SAM-binding methyltransferase superfamily. TrmB family.

The catalysed reaction is guanosine(46) in tRNA + S-adenosyl-L-methionine = N(7)-methylguanosine(46) in tRNA + S-adenosyl-L-homocysteine. The protein operates within tRNA modification; N(7)-methylguanine-tRNA biosynthesis. Catalyzes the formation of N(7)-methylguanine at position 46 (m7G46) in tRNA. This Helicobacter hepaticus (strain ATCC 51449 / 3B1) protein is tRNA (guanine-N(7)-)-methyltransferase.